A 63-amino-acid polypeptide reads, in one-letter code: Large ribosomal subunit protein bL28 (63 aa).

It belongs to the bacterial ribosomal protein bL28 family.

This Coprothermobacter proteolyticus (strain ATCC 35245 / DSM 5265 / OCM 4 / BT) protein is Large ribosomal subunit protein bL28.